A 1300-amino-acid polypeptide reads, in one-letter code: Kinesin-like protein KIN-4C (1300 aa).

Positions 6-360 constitute a Kinesin motor domain; it reads CVRVAVNIRP…LKYANRARNI (355 aa). 85–92 provides a ligand contact to ATP; that stretch reads GQTGSGKT. 3 coiled-coil regions span residues 580 to 615, 653 to 697, and 781 to 823; these read TSVL…LASI, QLMR…RAWK, and EVTV…AKIS. Composition is skewed to basic and acidic residues over residues 956–971 and 1001–1013; these read ADEN…KQET and EWKP…RESE. Disordered stretches follow at residues 956–1018, 1097–1132, 1144–1187, and 1200–1300; these read ADEN…ESVI, NADG…QQQV, ALAD…RKKW, and PALP…TRRV. Polar residues-rich tracts occupy residues 1169–1180, 1205–1222, 1230–1239, and 1275–1288; these read IGNTTGKSNVPR, THTN…TVDS, NSDSGESNSI, and GFVQ…SGSR. The span at 1289–1300 shows a compositional bias: basic and acidic residues; the sequence is TSDEKENHTRRV.

Belongs to the TRAFAC class myosin-kinesin ATPase superfamily. Kinesin family. KIN-4 subfamily. Homodimer.

In terms of biological role, kinesin-like motor protein involved in the control of the oriented deposition of cellulose microfibrils. This chain is Kinesin-like protein KIN-4C, found in Arabidopsis thaliana (Mouse-ear cress).